The chain runs to 321 residues: MIFVYALLALVITFVLVPVLIPTLKRMKFGQSIREEGPQSHMKKTGTPTMGGLTFLLSIVITSLVAIIFVEQANPIILLLFVTIGFGLIGFIDDYIIVVKKNNQGLTSKQKFLAQIGIAIIFFVLSNVFHLVNFSTSIHIPFTNVAIPLSFAYVIFIVFLQVGFSNAVNLTDGLDGLATGLSIIGFTMYAIMSFVLGETAIGIFCIIMLFALLGFLPYNINPAKVFMGDTGSLALGGIFATISIMLNQELSLIFIGLVFVIETLSVMLQVASFKLTGKRIFKMSPIHHHFELIGWSEWKVVTVFWAVGLISGLIGLWIGVH.

A run of 10 helical transmembrane segments spans residues 1–21, 50–70, 76–96, 112–132, 140–160, 176–196, 200–220, 225–245, 250–270, and 300–320; these read MIFV…PVLI, MGGL…IIFV, IILL…DDYI, FLAQ…FHLV, IPFT…IVFL, GLAT…SFVL, AIGI…PYNI, VFMG…ISIM, LSLI…MLQV, and VVTV…WIGV.

It belongs to the glycosyltransferase 4 family. MraY subfamily. It depends on Mg(2+) as a cofactor.

Its subcellular location is the cell membrane. The enzyme catalyses UDP-N-acetyl-alpha-D-muramoyl-L-alanyl-gamma-D-glutamyl-L-lysyl-D-alanyl-D-alanine + di-trans,octa-cis-undecaprenyl phosphate = Mur2Ac(oyl-L-Ala-gamma-D-Glu-L-Lys-D-Ala-D-Ala)-di-trans,octa-cis-undecaprenyl diphosphate + UMP. Its pathway is cell wall biogenesis; peptidoglycan biosynthesis. Catalyzes the initial step of the lipid cycle reactions in the biosynthesis of the cell wall peptidoglycan: transfers peptidoglycan precursor phospho-MurNAc-pentapeptide from UDP-MurNAc-pentapeptide onto the lipid carrier undecaprenyl phosphate, yielding undecaprenyl-pyrophosphoryl-MurNAc-pentapeptide, known as lipid I. The protein is Phospho-N-acetylmuramoyl-pentapeptide-transferase of Staphylococcus aureus (strain bovine RF122 / ET3-1).